We begin with the raw amino-acid sequence, 145 residues long: 3-hydroxyacyl-[acyl-carrier-protein] dehydratase FabZ (145 aa).

His-47 is a catalytic residue.

Belongs to the thioester dehydratase family. FabZ subfamily.

The protein resides in the cytoplasm. The enzyme catalyses a (3R)-hydroxyacyl-[ACP] = a (2E)-enoyl-[ACP] + H2O. Functionally, involved in unsaturated fatty acids biosynthesis. Catalyzes the dehydration of short chain beta-hydroxyacyl-ACPs and long chain saturated and unsaturated beta-hydroxyacyl-ACPs. The sequence is that of 3-hydroxyacyl-[acyl-carrier-protein] dehydratase FabZ from Thiobacillus denitrificans (strain ATCC 25259 / T1).